The chain runs to 326 residues: Nicotianamine synthase 2 (326 aa).

It belongs to the nicotianamine synthase (NAS)-like family. Expressed in roots.

It carries out the reaction 3 S-adenosyl-L-methionine = nicotianamine + 3 S-methyl-5'-thioadenosine + 3 H(+). In terms of biological role, synthesizes nicotianamine, a polyamine that is the first intermediate in the synthesis of the phytosiderophores of the mugineic acid type found in gramineae which serve as a sensor for the physiological iron status within the plant, and/or might be involved in the transport of iron. In Oryza sativa subsp. japonica (Rice), this protein is Nicotianamine synthase 2 (NAS2).